Here is a 197-residue protein sequence, read N- to C-terminus: Probable chorismate pyruvate-lyase 2 (197 aa).

The span at 1–14 (MRFDAADAHWRETP) shows a compositional bias: basic and acidic residues. A disordered region spans residues 1-23 (MRFDAADAHWRETPRPGASSAQK). Residues arginine 73, leucine 111, and glutamate 173 each contribute to the substrate site.

The protein belongs to the UbiC family.

The protein resides in the cytoplasm. It catalyses the reaction chorismate = 4-hydroxybenzoate + pyruvate. Its pathway is cofactor biosynthesis; ubiquinone biosynthesis. Its function is as follows. Removes the pyruvyl group from chorismate, with concomitant aromatization of the ring, to provide 4-hydroxybenzoate (4HB) for the ubiquinone pathway. This Burkholderia pseudomallei (strain 1710b) protein is Probable chorismate pyruvate-lyase 2.